We begin with the raw amino-acid sequence, 90 residues long: DNA-directed RNA polymerase subunit omega (90 aa).

The protein belongs to the RNA polymerase subunit omega family. As to quaternary structure, the RNAP catalytic core consists of 2 alpha, 1 beta, 1 beta' and 1 omega subunit. When a sigma factor is associated with the core the holoenzyme is formed, which can initiate transcription.

It catalyses the reaction RNA(n) + a ribonucleoside 5'-triphosphate = RNA(n+1) + diphosphate. Its function is as follows. Promotes RNA polymerase assembly. Latches the N- and C-terminal regions of the beta' subunit thereby facilitating its interaction with the beta and alpha subunits. The sequence is that of DNA-directed RNA polymerase subunit omega from Beutenbergia cavernae (strain ATCC BAA-8 / DSM 12333 / CCUG 43141 / JCM 11478 / NBRC 16432 / NCIMB 13614 / HKI 0122).